The sequence spans 113 residues: Putative pterin-4-alpha-carbinolamine dehydratase (113 aa).

Belongs to the pterin-4-alpha-carbinolamine dehydratase family.

The catalysed reaction is (4aS,6R)-4a-hydroxy-L-erythro-5,6,7,8-tetrahydrobiopterin = (6R)-L-erythro-6,7-dihydrobiopterin + H2O. This is Putative pterin-4-alpha-carbinolamine dehydratase from Pelodictyon phaeoclathratiforme (strain DSM 5477 / BU-1).